The chain runs to 409 residues: bZIP transcription factor 16 (409 aa).

Residues 1–16 show a composition bias toward basic and acidic residues; the sequence is MASNEMEKSSKEKEPK. Disordered stretches follow at residues 1–63, 118–236, 274–327, and 362–409; these read MASN…VASS, NGMT…LPVS, MHGK…LRKQ, and TTEN…KDST. A compositionally biased stretch (low complexity) spans 24–34; sequence APPSSQEPSSA. Residues 133 to 145 show a composition bias toward basic and acidic residues; sequence GDAKQSEVKEKLP. Polar residues predominate over residues 152 to 178; sequence SLGSLNMITGKNNEPGKNSGASANGAY. Residues 179-203 are compositionally biased toward low complexity; it reads SKSGESASDGSSEGSDGNSQNDSGS. Residues 216–228 show a composition bias toward polar residues; sequence NGGSANGPQNGSA. Residues 305 to 368 enclose the bZIP domain; that stretch reads ELKRQRRKQS…EELTTENTSL (64 aa). Residues 307–323 carry the Bipartite nuclear localization signal motif; it reads KRQRRKQSNRESARRSR. Residues 307 to 326 form a basic motif region; that stretch reads KRQRRKQSNRESARRSRLRK. Over residues 314–327 the composition is skewed to basic and acidic residues; sequence SNRESARRSRLRKQ. The tract at residues 333-368 is leucine-zipper; sequence LAQRAEVLNEENTNLRAEINKLKSQCEELTTENTSL. Residues 398-409 are compositionally biased toward basic and acidic residues; it reads AERKVDSYKDST.

This sequence belongs to the bZIP family. Monomer, homodimer and heterodimers with BZIP68 and GBF1/BZIP41. Heterodimers with GBF2/BZIP54 and GBF3/BZIP55. Binds DNA as monomer and forms homo- and heterodimers. The monomeric form is redox regulated. Interacts with GIP1.

Its subcellular location is the nucleus. In terms of biological role, transcriptional activator that binds to the G-box motif (5'-CACGTG-3') and other cis-acting elements with 5'-ACGT-3' core, such as Hex, C-box and as-1 motifs. Possesses high binding affinity to G-box, much lower affinity to Hex and C-box, and little affinity to as-1 element. G-box and G-box-like motifs are cis-acting elements defined in promoters of certain plant genes which are regulated by such diverse stimuli as light-induction or hormone control. Binds to the G-box motif 5'-CACGTG-3' of LHCB2.4 (At3g27690) promoter. May act as transcriptional repressor in light-regulated expression of LHCB2.4. Binds DNA as monomer. DNA-binding activity is redox-dependent. The chain is bZIP transcription factor 16 from Arabidopsis thaliana (Mouse-ear cress).